Here is a 7639-residue protein sequence, read N- to C-terminus: Nonribosomal peptide synthetase 4 (7639 aa).

An adenylation 1 region spans residues tryptophan 244–phenylalanine 636. Residues threonine 776 to glutamate 852 enclose the Carrier 1 domain. Serine 813 is modified (O-(pantetheine 4'-phosphoryl)serine). The interval phenylalanine 865–serine 1295 is epimerization 1. The tract at residues valine 1337 to isoleucine 1767 is condensation 1. The adenylation 2 stretch occupies residues phenylalanine 1786–leucine 2181. A Carrier 2 domain is found at alanine 2313 to serine 2389. At serine 2350 the chain carries O-(pantetheine 4'-phosphoryl)serine. The tract at residues valine 2426–leucine 2852 is condensation 2. An adenylation 3 region spans residues glutamine 2878–isoleucine 3269. The 77-residue stretch at arginine 3403 to glutamate 3479 folds into the Carrier 3 domain. An O-(pantetheine 4'-phosphoryl)serine modification is found at serine 3440. Positions alanine 3491–glutamine 3928 are epimerization 2. The tract at residues glutamate 3961–threonine 4389 is condensation 3. The tract at residues phenylalanine 4407–leucine 4810 is adenylation 4. One can recognise a Carrier 4 domain in the interval alanine 4944–glutamate 5020. Serine 4981 is modified (O-(pantetheine 4'-phosphoryl)serine). The interval glutamine 5058–methionine 5478 is condensation 4. Residues phenylalanine 5498–leucine 5900 are adenylation 5. The 77-residue stretch at threonine 6039–glycine 6115 folds into the Carrier 5 domain. An O-(pantetheine 4'-phosphoryl)serine modification is found at serine 6076. The segment at phenylalanine 6133–leucine 6567 is epimerization 3. The interval valine 6607–glutamine 7032 is condensation 5. Positions arginine 7088–serine 7164 constitute a Carrier 6 domain. The residue at position 7125 (serine 7125) is an O-(pantetheine 4'-phosphoryl)serine. Residues leucine 7254 to arginine 7603 are condensation 6.

Belongs to the NRP synthetase family.

It carries out the reaction D-allo-threonine + D-leucine + D-alanine + L-proline + 2 L-leucine + A = fusahexin + AH2 + 6 H2O. It participates in secondary metabolite biosynthesis. Its function is as follows. Nonribosomal peptide synthetase; part of the gene cluster that mediates the biosynthesis of the fusahexin, a cyclic hydrophobic hexapeptide with the amino acid sequence cyclo-(D-Ala-L-Leu-D-allo-Thr-L-Pro-D-Leu-L-Leu) that plays an important role in cell surface hydrophobicity. Fusahexin might also play a role in virulence, sensitivity to osmotic stress and oxidative stress. NRPS4 is the only enzyme within the cluster and its 5 catalytic modules are sufficient to produce fusahexin. The modules 1 to 4 incorporate respectively D-alanine, L-leucine, D-allo-threonine, and L-proline, which is supported by the presence of epimerase domains in modules 1 and 3, which incorporate D-amino acids. The terminal module is responsible for incorporation of the two adjacent leucine units, where the epimerase domain is only used to convert the first unit to D-leucine. The terminal condensation domain (Ct) is involved in cyclization with D-alanine and thereby releasing of fusahexin. The protein is Nonribosomal peptide synthetase 4 of Gibberella zeae (strain ATCC MYA-4620 / CBS 123657 / FGSC 9075 / NRRL 31084 / PH-1) (Wheat head blight fungus).